The chain runs to 270 residues: Phthiotriol/phenolphthiotriol dimycocerosates methyltransferase (270 aa).

It belongs to the methyltransferase superfamily. Phthiotriol/phenolphthiotriol dimycocerosates methyltransferase family.

Its function is as follows. Catalyzes the methylation of the lipid moiety of the intermediate compounds phthiotriol and glycosylated phenolphthiotriol dimycoserosates to form phthiocerol dimycocerosates (DIM A) and glycosylated phenolphthiocerol dimycocerosates (PGL). This is Phthiotriol/phenolphthiotriol dimycocerosates methyltransferase from Mycobacterium bovis (strain ATCC BAA-935 / AF2122/97).